We begin with the raw amino-acid sequence, 349 residues long: Probable sugar phosphate/phosphate translocator At5g25400 (349 aa).

Helical transmembrane passes span 15–35 (IIIS…VIVY), 49–69 (FPIS…FLLI), 89–109 (VVPI…AYIY), 113–133 (SFIQ…GVLF), 141–161 (ETMM…YGEA), 165–185 (VWGV…LVMI), 205–225 (VAPC…FPIL), 236–256 (LIFG…FLLV), 263–283 (TMNV…WSVI), and 286–306 (TVTP…AYYN). The EamA domain maps to 38–156 (YILDKKMYDW…LSISFGVAIA (119 aa)). The segment at 321–349 (TAQQVDEETGRLLEEREGNEGGRKNEPED) is disordered. A compositionally biased stretch (basic and acidic residues) spans 328-349 (ETGRLLEEREGNEGGRKNEPED).

It belongs to the TPT transporter family. TPT (TC 2.A.7.9) subfamily.

The protein localises to the membrane. This Arabidopsis thaliana (Mouse-ear cress) protein is Probable sugar phosphate/phosphate translocator At5g25400.